The following is a 252-amino-acid chain: Probable phosphatase SO_1652 (252 aa).

Zn(2+) contacts are provided by His-8, His-10, His-16, His-41, Glu-74, His-102, His-132, Asp-193, and His-195.

The protein belongs to the PHP family. The cofactor is Zn(2+).

In Shewanella oneidensis (strain ATCC 700550 / JCM 31522 / CIP 106686 / LMG 19005 / NCIMB 14063 / MR-1), this protein is Probable phosphatase SO_1652.